Consider the following 451-residue polypeptide: UPF0210 protein Cbei_2352 (451 aa).

Belongs to the UPF0210 family. Homodimer.

This is UPF0210 protein Cbei_2352 from Clostridium beijerinckii (strain ATCC 51743 / NCIMB 8052) (Clostridium acetobutylicum).